A 752-amino-acid chain; its full sequence is Iron-sulfur clusters transporter ABCB7, mitochondrial (752 aa).

The N-terminal 22 residues, 1-22 (MALLAMHSWRWAAAAAAFEKRR), are a transit peptide targeting the mitochondrion. Residues 23–140 (HSAILIRPLV…KDRPDLRARV (118 aa)) are Mitochondrial matrix-facing. The 297-residue stretch at 140–436 (VAISLGFLGG…LGTVYRETRQ (297 aa)) folds into the ABC transmembrane type-1 domain. The helical transmembrane segment at 141–161 (AISLGFLGGAKAMNIVVPFMF) threads the bilayer. Over 162–185 (KYAVDSLNQMSGNMLNLSDAPNTV) the chain is Mitochondrial intermembrane. The chain crosses the membrane as a helical span at residues 186–206 (ATMATAVLIGYGVSRAGAAFF). Topologically, residues 207 to 259 (NEVRNAVFGKVAQNSIRRIAKNVFLHLHNLDLGFHLSRQTGALSKAIDRGTRG) are mitochondrial matrix. Lysine 216 and lysine 251 each carry N6-acetyllysine. A helical membrane pass occupies residues 260–280 (ISFVLSALVFNLLPIMFEVML). The Mitochondrial intermembrane portion of the chain corresponds to 281–290 (VSGVLYYKCG). The chain crosses the membrane as a helical span at residues 291–311 (AQFALVTLGTLGTYTAFTVAV). Over 312–382 (TRWRTRFRIE…TLAMLNFGQS (71 aa)) the chain is Mitochondrial matrix. A glutathione-binding site is contributed by 315 to 319 (RTRFR). Serine 336 is modified (phosphoserine). Tyrosine 340 carries the phosphotyrosine modification. A Phosphothreonine modification is found at threonine 342. 378 to 381 (NFGQ) contributes to the glutathione binding site. The helical transmembrane segment at 383-403 (AIFSVGLTAIMVLASQGIVAG) threads the bilayer. Residues 404 to 409 (TLTVGD) lie on the Mitochondrial intermembrane side of the membrane. A helical transmembrane segment spans residues 410–430 (LVMVNGLLFQLSLPLNFLGTV). Glycine 428 contributes to the glutathione binding site. Residues 431-752 (YRETRQALID…SVKGCGNCSC (322 aa)) are Mitochondrial matrix-facing. Residues 472 to 706 (VAFDNVHFEY…PHSIYSEMWH (235 aa)) enclose the ABC transporter domain. ATP-binding positions include tyrosine 481 and 505–516 (GGSGSGKSTIVR).

Belongs to the ABC transporter superfamily. ABCB family. Heavy Metal importer (TC 3.A.1.210) subfamily. As to quaternary structure, homodimer or heterodimer. Interacts with C10orf88/PAAT. Forms a complex with ABCB10 and FECH, where a dimeric FECH bridges ABCB7 and ABCB10 homodimers; this complex may be required for cellular iron homeostasis, mitochondrial function and heme biosynthesis. Interacts with FECH. Interacts with ATP5F1A. Interacts with COX4I1; this interaction allows the regulation of cellular iron homeostasis and cellular reactive oxygen species (ROS) levels in cardiomyocytes.

The protein resides in the mitochondrion inner membrane. It catalyses the reaction (glutathione)4[2Fe(III)-2S] cluster(in) + ATP + H2O = (glutathione)4[2Fe(III)-2S] cluster(out) + ADP + phosphate + H(+). With respect to regulation, ATPase activity is stimulated by glutathione. Functionally, exports glutathione-coordinated iron-sulfur clusters such as [2Fe-2S]-(GS)4 cluster from the mitochondria to the cytosol in an ATP-dependent manner allowing the assembly of the cytosolic iron-sulfur (Fe/S) cluster-containing proteins and participates in iron homeostasis. Moreover, through a functional complex formed of ABCB7, FECH and ABCB10, also plays a role in the cellular iron homeostasis, mitochondrial function and heme biosynthesis. In cardiomyocytes, regulates cellular iron homeostasis and cellular reactive oxygen species (ROS) levels through its interaction with COX4I1. May also play a role in hematopoiesis. In Homo sapiens (Human), this protein is Iron-sulfur clusters transporter ABCB7, mitochondrial.